We begin with the raw amino-acid sequence, 146 residues long: DNA-directed RNA polymerases II, IV and V subunit 8B (146 aa).

Belongs to the eukaryotic RPB8 RNA polymerase subunit family. In terms of assembly, component of the RNA polymerase II, IV and V complexes. Associates with the mediator complex.

It is found in the nucleus. Functionally, DNA-dependent RNA polymerase catalyzes the transcription of DNA into RNA using the four ribonucleoside triphosphates as substrates. Component of RNA polymerase II which synthesizes mRNA precursors and many functional non-coding RNAs. Pol II is the central component of the basal RNA polymerase II transcription machinery. It is composed of mobile elements that move relative to each other. Component of RNA polymerases IV and V which mediate short-interfering RNAs (siRNA) accumulation and subsequent RNA-directed DNA methylation-dependent (RdDM) transcriptional gene silencing (TGS) of endogenous repeated sequences, including transposable elements. This is DNA-directed RNA polymerases II, IV and V subunit 8B (NRPB8B) from Arabidopsis thaliana (Mouse-ear cress).